Reading from the N-terminus, the 297-residue chain is ATP synthase subunit a (297 aa).

8 consecutive transmembrane segments (helical) span residues 38–58, 77–97, 107–127, 133–153, 174–194, 202–222, 230–250, and 252–272; these read PLIPTAHVLSIFMVLFMIAIL, GYVLVVQLLILQFENLTVDLL, LFIIIFVYILISNLMSMVGGI, SSTVTFSLGLMSFFGTFIMGV, TIPLMINPLNVIGYFAPLLSI, VLAGSIFIALLYSLFRTFFTL, VGLVFGTLAGGLVIPAFHVYF, and ILVSAIQAFVFVSLMLTYWSQ.

The protein belongs to the ATPase A chain family. In terms of assembly, F-type ATPases have 2 components, CF(1) - the catalytic core - and CF(0) - the membrane proton channel. CF(1) has five subunits: alpha(3), beta(3), gamma(1), delta(1), epsilon(1). CF(0) has three main subunits: a(1), b(2) and c(9-12). The alpha and beta chains form an alternating ring which encloses part of the gamma chain. CF(1) is attached to CF(0) by a central stalk formed by the gamma and epsilon chains, while a peripheral stalk is formed by the delta and b chains.

Its subcellular location is the cell membrane. In terms of biological role, key component of the proton channel; it plays a direct role in the translocation of protons across the membrane. The chain is ATP synthase subunit a from Mycoplasmoides gallisepticum (strain R(low / passage 15 / clone 2)) (Mycoplasma gallisepticum).